Reading from the N-terminus, the 219-residue chain is Steroid receptor RNA activator 1 (219 aa).

Disordered stretches follow at residues 1–90 (MAEL…SSPV) and 192–219 (SLSS…QPSS). Residues 23 to 32 (YGLQTQTGGT) are compositionally biased toward polar residues. Ser48 carries the phosphoserine modification. The segment covering 55-76 (SGPPPVDHPPPSSKASRPPPMG) has biased composition (pro residues). Over residues 192–203 (SLSSEENKEEKS) the composition is skewed to basic and acidic residues. Residues 206-219 (APENQTIPGFQPSS) show a composition bias toward polar residues.

The protein belongs to the SRA1 family. As to quaternary structure, SRA1 RNA exists in a ribonucleoprotein complex containing NCOA1. The RNA also forms a complex with PUS1 and RARG in the nucleus. Interacts with AR. In terms of tissue distribution, expressed in various prostate cancer cell lines.

The protein resides in the nucleus. It localises to the cytoplasm. Its function is as follows. Functional RNA which acts as a transcriptional coactivator that selectively enhances steroid receptor-mediated transactivation ligand-independently through a mechanism involving the modulating N-terminal domain (AF-1) of steroid receptors. Also mediates transcriptional coactivation of steroid receptors ligand-dependently through the steroid-binding domain (AF-2). Enhances cellular proliferation and differentiation and promotes apoptosis in vivo. May play a role in tumorigenesis. The polypeptide is Steroid receptor RNA activator 1 (Rattus norvegicus (Rat)).